We begin with the raw amino-acid sequence, 706 residues long: MPQDRFVASDSIASRVQQLVDEINRHNRLYYDDAAPEITDLQYDQLLAELTQLENDHPDLRRPDSPTQLVGGDVVDQLVQVPHRVPMLSIDNTYSREELAAAMERIEKSLEGESVAWTMEYKIDGVAGSIRYENGELTLALTRGNGQVGDDITHNVRTIRELPRSIADAALAHPEVAGGNVPEVLEVRGELYMTDADLADLNVRQTDAGHEPFKNTRNVTAGTIRLLDPKIAASRNIRFFCHGSGELVGVRASDHMTFLQHVQALGIPIAPDVVRFENKEDALQAIAKLELEMPDLPFEIDGIVFKVDSFEQREKLGVRSKSPRWVIAYKFERYEAITTLEAIDVQVGKTGTITPVAYLTPVDIADTTVSRASLHNADEIERLDVRVGDTVVVEKAGKIIPKVVRVEKHARTKPLPKFEFPTHCPQCDEVLTRDEGGVYIRCTNPACPAQLRQRLVYFGSRTGMDIDGLGEEVVDLLLQKELVENYADLYRLNVDELAELTWPRLRKGKGDEMIEVQFGRKNAESLVAGINESRTRGLARVLSSISIRHIGPRVAKLITAKFWNLDLLRSAKAEDLAAIHEIGDRIAESLVKFIHSESGSQTLSDLDAVGVTMSETEPVATPDEEANLPLAGKNIVATGTLQHYTRDEIKARIEELGGRAASSVSKKTDFLIAGEKAGSKLTKAESLGVEVLSEDDFRLRYETEAT.

NAD(+) is bound by residues 40 to 44, 89 to 90, and Glu120; these read DLQYD and SI. The N6-AMP-lysine intermediate role is filled by Lys122. Positions 143, 190, 306, and 330 each coordinate NAD(+). Residues Cys424, Cys427, Cys442, and Cys447 each contribute to the Zn(2+) site. The BRCT domain maps to 625 to 706; sequence EANLPLAGKN…FRLRYETEAT (82 aa).

It belongs to the NAD-dependent DNA ligase family. LigA subfamily. It depends on Mg(2+) as a cofactor. Mn(2+) is required as a cofactor.

The enzyme catalyses NAD(+) + (deoxyribonucleotide)n-3'-hydroxyl + 5'-phospho-(deoxyribonucleotide)m = (deoxyribonucleotide)n+m + AMP + beta-nicotinamide D-nucleotide.. In terms of biological role, DNA ligase that catalyzes the formation of phosphodiester linkages between 5'-phosphoryl and 3'-hydroxyl groups in double-stranded DNA using NAD as a coenzyme and as the energy source for the reaction. It is essential for DNA replication and repair of damaged DNA. The sequence is that of DNA ligase from Rhodopirellula baltica (strain DSM 10527 / NCIMB 13988 / SH1).